The primary structure comprises 122 residues: Large ribosomal subunit protein uL14 (122 aa).

It belongs to the universal ribosomal protein uL14 family. In terms of assembly, part of the 50S ribosomal subunit. Forms a cluster with proteins L3 and L19. In the 70S ribosome, L14 and L19 interact and together make contacts with the 16S rRNA in bridges B5 and B8.

In terms of biological role, binds to 23S rRNA. Forms part of two intersubunit bridges in the 70S ribosome. This is Large ribosomal subunit protein uL14 from Magnetococcus marinus (strain ATCC BAA-1437 / JCM 17883 / MC-1).